A 348-amino-acid polypeptide reads, in one-letter code: UDP-glucose 4-epimerase (348 aa).

NAD(+) contacts are provided by residues Gly-12–Ile-14, Asp-33–Asn-37, Asp-66–Ile-67, Phe-88, and Lys-92. Substrate is bound at residue Ser-132–Thr-134. Catalysis depends on Tyr-157, which acts as the Proton acceptor. Residues Lys-161 and Tyr-185 each contribute to the NAD(+) site. Substrate-binding positions include Tyr-185–Asn-187, Asn-206–Leu-208, Asn-224–Phe-226, Arg-239, and Arg-300–Asp-303.

This sequence belongs to the NAD(P)-dependent epimerase/dehydratase family. Homodimer. It depends on NAD(+) as a cofactor.

It carries out the reaction UDP-alpha-D-glucose = UDP-alpha-D-galactose. The enzyme catalyses UDP-N-acetyl-alpha-D-glucosamine = UDP-N-acetyl-alpha-D-galactosamine. The protein operates within carbohydrate metabolism; galactose metabolism. Its function is as follows. Catalyzes two distinct but analogous reactions: the reversible epimerization of UDP-glucose to UDP-galactose and the reversible epimerization of UDP-N-acetylglucosamine to UDP-N-acetylgalactosamine. The reaction with UDP-Gal plays a critical role in the Leloir pathway of galactose catabolism in which galactose is converted to the glycolytic intermediate glucose 6-phosphate. It contributes to the catabolism of dietary galactose and enables the endogenous biosynthesis of both UDP-Gal and UDP-GalNAc when exogenous sources are limited. Both UDP-sugar interconversions are important in the synthesis of glycoproteins and glycolipids. The protein is UDP-glucose 4-epimerase of Homo sapiens (Human).